The following is a 269-amino-acid chain: MNTKAVAHPDIAVWIMALGIAFSMALVLTALFNANPWEDHTYDLAPPIVAGMAAPHRDGREKMVCSSCHIVTPASAATGPGAGTLPIVEGTPAPHVDGREKMACASCHTIVKKGSVAKSGKASPAPVAFSQGMPLPEAMSVALAVTPAPAPLGNEAHERMVPFRYQGKIVSVAGAGTRSVWGDIYIQINDGINPPMWIDLAPLWFLQAEGCLVRPGMFVKGTAFRDPTQASAGLDYAMSVMANGEVCALRDDHLNGLWANVGGVDAEER.

The Cytoplasmic segment spans residues 1 to 10 (MNTKAVAHPD). The helical transmembrane segment at 11–31 (IAVWIMALGIAFSMALVLTAL) threads the bilayer. Residues 32–269 (FNANPWEDHT…NVGGVDAEER (238 aa)) lie on the Lumenal side of the membrane. The short motif at 48-71 (IVAGMAAPHRDGREKMVCSSCHIV) is the MCR (magnetochrome) 1 element. Residues Cys65, Cys68, His69, Cys104, Cys107, and His108 each coordinate heme. The MCR 2 motif lies at 87-110 (IVEGTPAPHVDGREKMACASCHTI).

The protein belongs to the magnetosome MamX family. Probably interacts with FtsZ-like and MamY proteins. Heme is required as a cofactor.

It localises to the magnetosome membrane. In terms of biological role, required for correct biomineralization of the magnetosome, maybe via redox control. May function with MamY, MamZ amd Mms6 in biomineralization. In Magnetospirillum gryphiswaldense (strain DSM 6361 / JCM 21280 / NBRC 15271 / MSR-1), this protein is Magnetosome protein MamX.